The sequence spans 282 residues: Phosphatidylglycerol--prolipoprotein diacylglyceryl transferase (282 aa).

3 consecutive transmembrane segments (helical) span residues 18–38, 55–75, and 89–109; these read LSIK…YFIA, VIFY…VIFQ, and IWHG…TGII. Arg137 is an a 1,2-diacyl-sn-glycero-3-phospho-(1'-sn-glycerol) binding site. Helical transmembrane passes span 203–223 and 235–255; these read VGET…FVEG and IRVA…ILIY.

Belongs to the Lgt family.

The protein localises to the cell membrane. The catalysed reaction is L-cysteinyl-[prolipoprotein] + a 1,2-diacyl-sn-glycero-3-phospho-(1'-sn-glycerol) = an S-1,2-diacyl-sn-glyceryl-L-cysteinyl-[prolipoprotein] + sn-glycerol 1-phosphate + H(+). It participates in protein modification; lipoprotein biosynthesis (diacylglyceryl transfer). Its function is as follows. Catalyzes the transfer of the diacylglyceryl group from phosphatidylglycerol to the sulfhydryl group of the N-terminal cysteine of a prolipoprotein, the first step in the formation of mature lipoproteins. The polypeptide is Phosphatidylglycerol--prolipoprotein diacylglyceryl transferase (Staphylococcus haemolyticus (strain JCSC1435)).